The primary structure comprises 1078 residues: Nonribosomal peptide synthetase aneB (1078 aa).

Residues 20–417 (FQQNVLDRPD…HGRKDTQVKI (398 aa)) form an adenylation region. The 77-residue stretch at 559 to 635 (MPTTPLERQM…TLCQHVSVRP (77 aa)) folds into the Carrier domain. Ser-596 bears the O-(pantetheine 4'-phosphoryl)serine mark. The interval 699–1013 (NYTLRLDVKL…HEMGYYGPVT (315 aa)) is condensation.

This sequence belongs to the NRP synthetase family.

It catalyses the reaction holo-[peptidyl-carrier protein] + L-proline + ATP = L-prolyl-[peptidyl-carrier protein] + AMP + diphosphate. It functions in the pathway secondary metabolite biosynthesis. Its function is as follows. Nonribosomal peptide synthetase; part of the gene cluster that mediates the biosynthesis of aculenes, a unique type of norsesquiterpenes that contain a nordaucane skeleton linked to an L-proline moiety and are of mixed biosynthetic origin. The pathway begins with the synthesis of dauca-4,7-diene by the terpene cyclase aneC using farnesyl pyrophosphate (FPP) as substrate. The cytochrome P450 monooxygenase aneF then performs the initial oxidation at C-12 of dauca-4,7-diene to yield asperaculane D. Asperaculane D is substrate of the cytochrome P450 monooxygenase aneD for C-10 hydroxylation to yield asperaculane E. The cytochrome P450 monooxygenase aneG then converts asperaculane E into aculene D via C-2 oxidation. The monomodular nonribosomal peptide synthase aneB adenylates L-proline and the thiohydrolase aneE transfers this activated L-proline derivative to aculenes D and C to produce respectively aculenes B and A. The dioxygenase aneA converts aculene D into aculene C, and aculene B into aculene A by introducing the 5,6-alkene moiety. Asperculanes A, B, C and F, as well as 14-prolyl asperculane C, might be shunt products of the pathway. The sequence is that of Nonribosomal peptide synthetase aneB from Aspergillus aculeatus (strain ATCC 16872 / CBS 172.66 / WB 5094).